Here is a 216-residue protein sequence, read N- to C-terminus: Pyridoxine/pyridoxamine 5'-phosphate oxidase (216 aa).

Substrate contacts are provided by residues 9–12 (RLSY) and Arg-67. FMN is bound by residues 62–67 (RIVLLR), 77–78 (YT), Lys-84, and Gln-106. Residues Tyr-124, Arg-128, and Ser-132 each contribute to the substrate site. FMN is bound by residues 142–143 (QS) and Trp-188. A substrate-binding site is contributed by 194–196 (RMH). Position 198 (Arg-198) interacts with FMN.

The protein belongs to the pyridoxamine 5'-phosphate oxidase family. In terms of assembly, homodimer. The cofactor is FMN.

The catalysed reaction is pyridoxamine 5'-phosphate + O2 + H2O = pyridoxal 5'-phosphate + H2O2 + NH4(+). It carries out the reaction pyridoxine 5'-phosphate + O2 = pyridoxal 5'-phosphate + H2O2. Its pathway is cofactor metabolism; pyridoxal 5'-phosphate salvage; pyridoxal 5'-phosphate from pyridoxamine 5'-phosphate: step 1/1. The protein operates within cofactor metabolism; pyridoxal 5'-phosphate salvage; pyridoxal 5'-phosphate from pyridoxine 5'-phosphate: step 1/1. In terms of biological role, catalyzes the oxidation of either pyridoxine 5'-phosphate (PNP) or pyridoxamine 5'-phosphate (PMP) into pyridoxal 5'-phosphate (PLP). In Psychrobacter arcticus (strain DSM 17307 / VKM B-2377 / 273-4), this protein is Pyridoxine/pyridoxamine 5'-phosphate oxidase.